Reading from the N-terminus, the 716-residue chain is Myogenesis-regulating glycosidase (716 aa).

Residues Met-1–Ala-11 are compositionally biased toward polar residues. The interval Met-1–Leu-26 is disordered. The Cytoplasmic portion of the chain corresponds to Met-1–Pro-55. A helical; Signal-anchor for type II membrane protein transmembrane segment spans residues Leu-56–Tyr-76. Over Tyr-77–Ser-716 the chain is Extracellular. N-linked (GlcNAc...) asparagine glycosylation is found at Asn-239, Asn-249, and Asn-455. Catalysis depends on residues Asp-462 and Glu-465. Asp-527 (proton donor) is an active-site residue.

Belongs to the glycosyl hydrolase 31 family. In terms of assembly, interacts with IGF2; this interaction is required for IGF2 secretion. As to expression, expressed in brain, liver, spleen, skeletal muscle, heart, lung and kidney. High expression is observed in the cerebellum, specifically in astrocytes. Highly expressed in skeletal muscle (at protein level).

The protein localises to the nucleus membrane. It is found in the endoplasmic reticulum membrane. In terms of biological role, putative glycosidase. Promotes myogenesis by activating AKT signaling through the maturation and secretion of IGF2. The sequence is that of Myogenesis-regulating glycosidase (Myorg) from Mus musculus (Mouse).